We begin with the raw amino-acid sequence, 61 residues long: Small ribosomal subunit protein bS21 (61 aa).

Residues 40–61 (KPSVKRKKKSEAARKRKNKRRF) are disordered. The span at 43 to 61 (VKRKKKSEAARKRKNKRRF) shows a compositional bias: basic residues.

It belongs to the bacterial ribosomal protein bS21 family.

This is Small ribosomal subunit protein bS21 from Ligilactobacillus salivarius (strain UCC118) (Lactobacillus salivarius).